Consider the following 389-residue polypeptide: Lipid-A-disaccharide synthase (389 aa).

This sequence belongs to the LpxB family.

It carries out the reaction a lipid X + a UDP-2-N,3-O-bis[(3R)-3-hydroxyacyl]-alpha-D-glucosamine = a lipid A disaccharide + UDP + H(+). Its pathway is bacterial outer membrane biogenesis; LPS lipid A biosynthesis. Condensation of UDP-2,3-diacylglucosamine and 2,3-diacylglucosamine-1-phosphate to form lipid A disaccharide, a precursor of lipid A, a phosphorylated glycolipid that anchors the lipopolysaccharide to the outer membrane of the cell. This chain is Lipid-A-disaccharide synthase, found in Burkholderia ambifaria (strain ATCC BAA-244 / DSM 16087 / CCUG 44356 / LMG 19182 / AMMD) (Burkholderia cepacia (strain AMMD)).